Consider the following 147-residue polypeptide: Hemoglobin subunit epsilon (147 aa).

Residues 3-147 form the Globin domain; the sequence is HFTAEEKAAV…VAIALAHKYH (145 aa). A phosphoserine mark is found at serine 14 and serine 51. The heme b site is built by histidine 64 and histidine 93.

It belongs to the globin family. As to quaternary structure, heterotetramer of two alpha chains and two epsilon chains in early embryonic hemoglobin Gower-2; two zeta chains and two epsilon chains in early embryonic hemoglobin Gower-1. In terms of tissue distribution, red blood cells.

The epsilon chain is a beta-type chain of early mammalian embryonic hemoglobin. The polypeptide is Hemoglobin subunit epsilon (HBE1) (Pan troglodytes (Chimpanzee)).